The chain runs to 109 residues: Nucleoid-associated protein HAPS_1040 (109 aa).

Positions 1-21 are disordered; it reads MFGKGGLGGLMKQAQQMQERM. Low complexity predominate over residues 10–19; the sequence is LMKQAQQMQE.

The protein belongs to the YbaB/EbfC family. In terms of assembly, homodimer.

The protein resides in the cytoplasm. It is found in the nucleoid. In terms of biological role, binds to DNA and alters its conformation. May be involved in regulation of gene expression, nucleoid organization and DNA protection. The protein is Nucleoid-associated protein HAPS_1040 of Glaesserella parasuis serovar 5 (strain SH0165) (Haemophilus parasuis).